We begin with the raw amino-acid sequence, 292 residues long: MCTAVRQDLSLKCGGTDVKQPGDSQPGHLRALLGFTLPSVYASDSSTQILPKHIGKPEFPDTGWDRIKDLFYNVEGQYTEELRNVVKSGIASAIVGMIYGGLPGARHARQRFIQCSQAEIYRNRVDAVRAAHNAAIRGFLRFGWRWSWRVAAFVTLFNTVNTGLTVYRDQNALSHFAVSGAVTGGVFRLNLGLRGLLSGTIIGVILGFPAGVLILGLQNLGGETMRDKRRRERRELHELRVTEWNARLKVTDDLIGEMSSLKHQDSEIDLQQVEELLSQPRNGNAAKGPYNQ.

The next 2 helical transmembrane spans lie at 146-168 (WSWR…TVYR) and 195-215 (GLLS…VLIL).

This sequence belongs to the Tim17/Tim22/Tim23 family. In terms of assembly, associates with the intermediate 315 kDa subcomplex of incompletely assembled complex I.

It is found in the mitochondrion membrane. Functionally, chaperone protein involved in the assembly of the mitochondrial NADH:ubiquinone oxidoreductase complex (complex I). Participates in constructing the membrane arm of complex I. This chain is Complex I assembly factor TIMMDC1, mitochondrial (timmdc1), found in Danio rerio (Zebrafish).